The primary structure comprises 262 residues: MNSSFSAPAKKSLGQHFLADRYYIDRIVQAVDPRAGQHLVEIGPGQGAITFPLLRKHGALTVIEFDRDLIAPLTEAAAPIGALRIIHRDVLSVDFTALADGTPIRLVGNLPYNISSPILFHALDHAAAVADMHFMLQKEVVDRMAAGPGSKVYGRLSVMLQAYCEVTALFVVPPGAFRPPPKVDSAVVRLVPRDPATVLINDRRRFADVVRAGFGQRRKTLRNALSAICEPAHFDAAQVRPDARAEQLEVADFIRLANVELA.

S-adenosyl-L-methionine contacts are provided by H16, L18, G43, E64, D89, and N109.

It belongs to the class I-like SAM-binding methyltransferase superfamily. rRNA adenine N(6)-methyltransferase family. RsmA subfamily.

It localises to the cytoplasm. It catalyses the reaction adenosine(1518)/adenosine(1519) in 16S rRNA + 4 S-adenosyl-L-methionine = N(6)-dimethyladenosine(1518)/N(6)-dimethyladenosine(1519) in 16S rRNA + 4 S-adenosyl-L-homocysteine + 4 H(+). Its function is as follows. Specifically dimethylates two adjacent adenosines (A1518 and A1519) in the loop of a conserved hairpin near the 3'-end of 16S rRNA in the 30S particle. May play a critical role in biogenesis of 30S subunits. The protein is Ribosomal RNA small subunit methyltransferase A of Xanthomonas axonopodis pv. citri (strain 306).